The primary structure comprises 459 residues: ERBB receptor feedback inhibitor 1 (459 aa).

At serine 2 the chain carries N-acetylserine. Residues threonine 126 and threonine 130 each carry the phosphothreonine modification. The disordered stretch occupies residues 227-352 (QNRVVPDPNP…VMPPTQSFAP (126 aa)). Phosphoserine occurs at positions 250 and 271. Polar residues predominate over residues 264–273 (SSCTHRASPS). Pro residues predominate over residues 282–291 (PPRVPIPPRP). Serine 300 is modified (phosphoserine). Residues 310–323 (DEDRPPKVPPREPL) show a composition bias toward basic and acidic residues. Positions 324-335 (SRSNSRTPSPKS) are enriched in polar residues. The tract at residues 332–361 (SPKSLPSYLNGVMPPTQSFAPDPKYVSSKA) is interaction with EGFR and ERBB2 and regulation of EGFR activation. Serine 458 bears the Phosphoserine mark.

It belongs to the MIG6 family. As to quaternary structure, interacts with EGFR and ERBB2.

The protein resides in the cytoplasm. It is found in the cell membrane. It localises to the nucleus. Its function is as follows. Negative regulator of EGFR signaling in skin morphogenesis. Acts as a negative regulator for several EGFR family members, including ERBB2, ERBB3 and ERBB4. Inhibits EGFR catalytic activity by interfering with its dimerization. Inhibits autophosphorylation of EGFR, ERBB2 and ERBB4. Important for normal keratinocyte proliferation and differentiation. Plays a role in modulating the response to steroid hormones in the uterus. Required for normal response to progesterone in the uterus and for fertility. Mediates epithelial estrogen responses in the uterus by regulating ESR1 levels and activation. Important for regulation of endometrium cell proliferation. Important for normal prenatal and perinatal lung development. This chain is ERBB receptor feedback inhibitor 1 (Errfi1), found in Rattus norvegicus (Rat).